Reading from the N-terminus, the 364-residue chain is Protein trichome birefringence-like 40 (364 aa).

A helical; Signal-anchor for type II membrane protein membrane pass occupies residues 9–25 (LASLSLILFSSFPGLLA). The GDS motif motif lies at 118-120 (GDS). The short motif at 341 to 355 (DCSHWCLPGLPDTWN) is the DCXHWCLPGXXDXWN motif element.

It belongs to the PC-esterase family. TBL subfamily.

The protein resides in the membrane. In terms of biological role, may act as a bridging protein that binds pectin and other cell wall polysaccharides. Probably involved in maintaining esterification of pectins. May be involved in the specific O-acetylation of cell wall polymers. This is Protein trichome birefringence-like 40 (TBL40) from Arabidopsis thaliana (Mouse-ear cress).